Reading from the N-terminus, the 304-residue chain is Aspartate carbamoyltransferase catalytic subunit (304 aa).

The carbamoyl phosphate site is built by Arg-54 and Thr-55. Lys-83 is a binding site for L-aspartate. Arg-104, His-132, and Gln-135 together coordinate carbamoyl phosphate. Positions 165 and 226 each coordinate L-aspartate. Residues Leu-265 and Pro-266 each contribute to the carbamoyl phosphate site.

Belongs to the aspartate/ornithine carbamoyltransferase superfamily. ATCase family. In terms of assembly, heterooligomer of catalytic and regulatory chains.

The enzyme catalyses carbamoyl phosphate + L-aspartate = N-carbamoyl-L-aspartate + phosphate + H(+). Its pathway is pyrimidine metabolism; UMP biosynthesis via de novo pathway; (S)-dihydroorotate from bicarbonate: step 2/3. Catalyzes the condensation of carbamoyl phosphate and aspartate to form carbamoyl aspartate and inorganic phosphate, the committed step in the de novo pyrimidine nucleotide biosynthesis pathway. The chain is Aspartate carbamoyltransferase catalytic subunit from Pyrobaculum islandicum (strain DSM 4184 / JCM 9189 / GEO3).